Consider the following 478-residue polypeptide: Protein nucleotidyltransferase YdiU (478 aa).

G84, G86, R87, K107, D119, G120, R170, and R177 together coordinate ATP. D246 acts as the Proton acceptor in catalysis. Positions 247 and 256 each coordinate Mg(2+). ATP is bound at residue D256.

Belongs to the SELO family. The cofactor is Mg(2+). It depends on Mn(2+) as a cofactor.

It catalyses the reaction L-seryl-[protein] + ATP = 3-O-(5'-adenylyl)-L-seryl-[protein] + diphosphate. It carries out the reaction L-threonyl-[protein] + ATP = 3-O-(5'-adenylyl)-L-threonyl-[protein] + diphosphate. The enzyme catalyses L-tyrosyl-[protein] + ATP = O-(5'-adenylyl)-L-tyrosyl-[protein] + diphosphate. The catalysed reaction is L-histidyl-[protein] + UTP = N(tele)-(5'-uridylyl)-L-histidyl-[protein] + diphosphate. It catalyses the reaction L-seryl-[protein] + UTP = O-(5'-uridylyl)-L-seryl-[protein] + diphosphate. It carries out the reaction L-tyrosyl-[protein] + UTP = O-(5'-uridylyl)-L-tyrosyl-[protein] + diphosphate. Nucleotidyltransferase involved in the post-translational modification of proteins. It can catalyze the addition of adenosine monophosphate (AMP) or uridine monophosphate (UMP) to a protein, resulting in modifications known as AMPylation and UMPylation. The protein is Protein nucleotidyltransferase YdiU of Escherichia coli (strain SE11).